The chain runs to 750 residues: Sulfhydryl oxidase 1 (750 aa).

The signal sequence occupies residues Met1–Ala32. Positions Ala33 to Ser159 constitute a Thioredoxin domain. Catalysis depends on nucleophile residues Cys73 and Cys76. 2 disulfide bridges follow: Cys73–Cys76 and Cys104–Cys113. N-linked (GlcNAc...) asparagine glycosylation is found at Asn133 and Asn246. An intrachain disulfide couples Cys396 to Cys408. In terms of domain architecture, ERV/ALR sulfhydryl oxidase spans Ser399–Trp506. Residues Arg404, Trp411, His415, Asp454, His458, Trp481–Asn488, Lys503, and Trp506 each bind FAD. Residues Cys452 and Cys455 are joined by a disulfide bond. Cys512 and Cys515 are disulfide-bonded. Disordered stretches follow at residues Val545 to Asn567 and Glu585 to Thr632. A compositionally biased stretch (low complexity) spans Ala587 to Ala597. The chain crosses the membrane as a helical span at residues Phe710 to Met730.

The protein belongs to the quiescin-sulfhydryl oxidase (QSOX) family. Monomer. Requires FAD as cofactor. N-glycosylated. O-glycosylated on Thr and Ser residues. As to expression, isoform 3: Detected in seminal vesicle fluid (at protein level). Isoform 1: Detected in brain, hypophysis, heart, testis and the seminal vesicle. Isoform 3: Highly expressed in the seminal vesicles followed by testis, heart, brain, thymus, hypophysis and lung. Also expressed in prostate, kidney, spleen, liver.

Its subcellular location is the golgi apparatus membrane. The protein localises to the secreted. The enzyme catalyses 2 R'C(R)SH + O2 = R'C(R)S-S(R)CR' + H2O2. Functionally, catalyzes the oxidation of sulfhydryl groups in peptide and protein thiols to disulfides with the reduction of oxygen to hydrogen peroxide. Plays a role in disulfide bond formation in a variety of extracellular proteins. In fibroblasts, required for normal incorporation of laminin into the extracellular matrix, and thereby for normal cell-cell adhesion and cell migration. This is Sulfhydryl oxidase 1 (Qsox1) from Rattus norvegicus (Rat).